A 194-amino-acid chain; its full sequence is UPF0301 protein CBU_2093 (194 aa).

Belongs to the UPF0301 (AlgH) family.

The chain is UPF0301 protein CBU_2093 from Coxiella burnetii (strain RSA 493 / Nine Mile phase I).